The following is a 323-amino-acid chain: Peridinin-chlorophyll a-binding protein 3 (323 aa).

2 repeat units span residues 1 to 173 (DGIA…RYVP) and 174 to 323 (DGPV…SAVV).

In terms of assembly, homotrimer.

It is found in the plastid. The protein localises to the chloroplast. Functionally, water-soluble antenna for capture of solar energy in the blue-green range. Peridinin is an asymmetric carotenoid. In Amphidinium carterae (Dinoflagellate), this protein is Peridinin-chlorophyll a-binding protein 3.